The following is a 160-amino-acid chain: Cytochrome b6-f complex subunit 4 (160 aa).

3 consecutive transmembrane segments (helical) span residues 36-56 (LLYMFPVVILGTFACVIGLSV), 95-115 (LLGVLLMAAVPAGLITVPFIE), and 131-151 (ILFLLGTLVAVWLGIGSTFPI).

The protein belongs to the cytochrome b family. PetD subfamily. As to quaternary structure, the 4 large subunits of the cytochrome b6-f complex are cytochrome b6, subunit IV (17 kDa polypeptide, petD), cytochrome f and the Rieske protein, while the 4 small subunits are petG, petL, petM and petN. The complex functions as a dimer. Post-translationally, the N-terminus is blocked.

Its subcellular location is the plastid. The protein localises to the chloroplast thylakoid membrane. In terms of biological role, component of the cytochrome b6-f complex, which mediates electron transfer between photosystem II (PSII) and photosystem I (PSI), cyclic electron flow around PSI, and state transitions. In Chlamydomonas reinhardtii (Chlamydomonas smithii), this protein is Cytochrome b6-f complex subunit 4.